The following is a 219-amino-acid chain: Thiamine-phosphate synthase (219 aa).

4-amino-2-methyl-5-(diphosphooxymethyl)pyrimidine is bound by residues 44–48 (QFREK) and Asn-79. 2 residues coordinate Mg(2+): Asp-80 and Asp-99. Ser-117 contributes to the 4-amino-2-methyl-5-(diphosphooxymethyl)pyrimidine binding site. 143–145 (TST) is a 2-[(2R,5Z)-2-carboxy-4-methylthiazol-5(2H)-ylidene]ethyl phosphate binding site. A 4-amino-2-methyl-5-(diphosphooxymethyl)pyrimidine-binding site is contributed by Lys-146. 2-[(2R,5Z)-2-carboxy-4-methylthiazol-5(2H)-ylidene]ethyl phosphate contacts are provided by residues Gly-175 and 195 to 196 (IS).

The protein belongs to the thiamine-phosphate synthase family. Requires Mg(2+) as cofactor.

It catalyses the reaction 2-[(2R,5Z)-2-carboxy-4-methylthiazol-5(2H)-ylidene]ethyl phosphate + 4-amino-2-methyl-5-(diphosphooxymethyl)pyrimidine + 2 H(+) = thiamine phosphate + CO2 + diphosphate. The catalysed reaction is 2-(2-carboxy-4-methylthiazol-5-yl)ethyl phosphate + 4-amino-2-methyl-5-(diphosphooxymethyl)pyrimidine + 2 H(+) = thiamine phosphate + CO2 + diphosphate. It carries out the reaction 4-methyl-5-(2-phosphooxyethyl)-thiazole + 4-amino-2-methyl-5-(diphosphooxymethyl)pyrimidine + H(+) = thiamine phosphate + diphosphate. It functions in the pathway cofactor biosynthesis; thiamine diphosphate biosynthesis; thiamine phosphate from 4-amino-2-methyl-5-diphosphomethylpyrimidine and 4-methyl-5-(2-phosphoethyl)-thiazole: step 1/1. Functionally, condenses 4-methyl-5-(beta-hydroxyethyl)thiazole monophosphate (THZ-P) and 2-methyl-4-amino-5-hydroxymethyl pyrimidine pyrophosphate (HMP-PP) to form thiamine monophosphate (TMP). This chain is Thiamine-phosphate synthase, found in Bacillus cereus (strain AH820).